The primary structure comprises 124 residues: Small ribosomal subunit protein uS12c (124 aa).

The segment at 104–124 (SGGVKDRTQRRSKYGVKKPKS) is disordered. Positions 113-124 (RRSKYGVKKPKS) are enriched in basic residues.

The protein belongs to the universal ribosomal protein uS12 family. In terms of assembly, part of the 30S ribosomal subunit.

Its subcellular location is the plastid. The protein localises to the chloroplast. In terms of biological role, with S4 and S5 plays an important role in translational accuracy. Located at the interface of the 30S and 50S subunits. In Thalassiosira pseudonana (Marine diatom), this protein is Small ribosomal subunit protein uS12c (rps12).